Here is a 481-residue protein sequence, read N- to C-terminus: Tryptophan--tRNA ligase, cytoplasmic (481 aa).

Residues 12–68 (SPLELFNSIATQGELVRSLKAGNAPKDEIDSAVKMLLSLKMSYKAAMGEEYKAGCPP) enclose the WHEP-TRS domain. Lys-158 carries the N6-succinyllysine modification. The 'HIGH' region signature appears at 168-177 (PSSEAMHLGH). A 'KMSKS' region motif is present at residues 353-357 (KMSAS). Ser-355 is modified (phosphoserine).

It belongs to the class-I aminoacyl-tRNA synthetase family. As to quaternary structure, homodimer. Interacts with oxidized form of GAPDH. In terms of processing, proteolytic cleavage generates 2 forms; T1-TrpRS and T2-TrpRS. Isoform 2 is widely expressed, isoform 1 is found only in embryonic stem cells.

Its subcellular location is the cytoplasm. The enzyme catalyses tRNA(Trp) + L-tryptophan + ATP = L-tryptophyl-tRNA(Trp) + AMP + diphosphate + H(+). Functionally, catalyzes the attachment of tryptophan to tRNA(Trp) in a two-step reaction: tryptophan is first activated by ATP to form Trp-AMP and then transferred to the acceptor end of the tRNA(Trp). Could also possess an angiostatic activity. The protein is Tryptophan--tRNA ligase, cytoplasmic of Mus musculus (Mouse).